The primary structure comprises 709 residues: Tyrosine-protein phosphatase cdc-14 (709 aa).

One can recognise a Tyrosine-protein phosphatase domain in the interval 196 to 354; that stretch reads DFNWIIPGKI…QKFCWSLSQS (159 aa). C295 functions as the Phosphocysteine intermediate in the catalytic mechanism. Positions 366-371 match the Nuclear localization signal motif; the sequence is KRNVRR. A Nuclear export signal motif is present at residues 372–381; that stretch reads LVNQVDDINL. Disordered stretches follow at residues 403–541, 573–594, and 628–661; these read VQVQ…LTRT, RYLS…GTSP, and ESKP…PYPS. A compositionally biased stretch (polar residues) spans 404–413; that stretch reads QVQNGRSTAP. The segment covering 463–479 has biased composition (low complexity); that stretch reads TTSPNSSSSRRFVKSST. Polar residues-rich tracts occupy residues 480-490 and 501-521; these read PQMTVPSQAYL and PSKN…TPNG. Positions 526-541 are enriched in low complexity; that stretch reads RTRNSSGNTTSTLTRT. Residues 639–649 show a composition bias toward polar residues; it reads PGTSKSTSSLK.

Belongs to the protein-tyrosine phosphatase family. Non-receptor class CDC14 subfamily.

The protein localises to the cytoplasm. Its subcellular location is the cytoskeleton. The protein resides in the microtubule organizing center. It localises to the centrosome. It is found in the spindle. The protein localises to the midbody. Its subcellular location is the nucleus. The enzyme catalyses O-phospho-L-tyrosyl-[protein] + H2O = L-tyrosyl-[protein] + phosphate. Inhibited by sodium orthovanadate. Weakly inhibited by sodium fluoride and okadaic acid. Its function is as follows. Protein phosphatase that negatively regulates the G1-to-S phase transition to inhibit the cell cycle and establish quiescence in cells of multiple lineages including vulval, hypodermal and intestinal. Promotes nuclear accumulation and activity of the cyclin-dependent kinase inhibitor cki-1 which leads to inhibition of G1 progression during vulval tissue development. Has been shown to not be required for cytokinesis. However, in the embryo, in a contrasting study, has been shown to act as a regulator of central spindle formation and cytokinesis, and may be required for localization of the spindle component zen-4, and its interacting partner air-2 at the spindle during late cell divisions. Main regulator of cell cycle arrest in vulval precursor cells. The chain is Tyrosine-protein phosphatase cdc-14 from Caenorhabditis elegans.